The sequence spans 313 residues: NF-kappa-B inhibitor delta (313 aa).

ANK repeat units lie at residues 48 to 83, 84 to 113, 117 to 146, 152 to 201, 206 to 236, and 243 to 276; these read EGDT…IREH, KGKT…EPNA, QGRS…QVDL, EGLT…NHTS, SNKT…DLRT, and HGNT…DPTL.

It belongs to the NF-kappa-B inhibitor family. Interacts with NFKB1, RELA and RELB; in the nucleus.

Its subcellular location is the nucleus. Functionally, regulates the expression of IL-2, IL-6, and other cytokines through regulation on NF-kappa-B activity. Functions in the regulation of inflammatory responses. Involved in the induction of T helper 17 cells (Th17) differentiation upon recognition of antigen by T cell antigen receptor (TCR). May also regulate TCR-induced negative selection of thymocytes. The protein is NF-kappa-B inhibitor delta (NFKBID) of Homo sapiens (Human).